The primary structure comprises 315 residues: Ribosomal RNA small subunit methyltransferase H (315 aa).

S-adenosyl-L-methionine is bound by residues 37–39 (GGH), D57, F83, D105, and Q112.

Belongs to the methyltransferase superfamily. RsmH family.

The protein resides in the cytoplasm. The catalysed reaction is cytidine(1402) in 16S rRNA + S-adenosyl-L-methionine = N(4)-methylcytidine(1402) in 16S rRNA + S-adenosyl-L-homocysteine + H(+). In terms of biological role, specifically methylates the N4 position of cytidine in position 1402 (C1402) of 16S rRNA. The polypeptide is Ribosomal RNA small subunit methyltransferase H (Pseudomonas fluorescens (strain Pf0-1)).